A 225-amino-acid chain; its full sequence is Transmembrane protein 40 (225 aa).

An N-acetylmethionine modification is found at methionine 1. Positions 1 to 14 are enriched in low complexity; that stretch reads MEASGSSSQSQDSG. A disordered region spans residues 1 to 96; that stretch reads MEASGSSSQS…RRDSLRGADH (96 aa). The span at 15–29 shows a compositional bias: basic and acidic residues; the sequence is GVHRETEDHYQETEL. The span at 30-39 shows a compositional bias: basic residues; that stretch reads HKHHGKARER. Over residues 46–68 the composition is skewed to low complexity; the sequence is SSSSSSSSSSSSSSSSSSSSSSD. Positions 78–87 are enriched in basic residues; it reads GPRKHRRRPR. Serine 129 is subject to Phosphoserine. A run of 2 helical transmembrane segments spans residues 152-172 and 179-199; these read FFHF…YHYY and LGVG…FGLV.

The protein resides in the membrane. This Mus musculus (Mouse) protein is Transmembrane protein 40 (Tmem40).